Reading from the N-terminus, the 211-residue chain is Large ribosomal subunit protein uL3 (211 aa).

The protein belongs to the universal ribosomal protein uL3 family. In terms of assembly, part of the 50S ribosomal subunit. Forms a cluster with proteins L14 and L19.

Its function is as follows. One of the primary rRNA binding proteins, it binds directly near the 3'-end of the 23S rRNA, where it nucleates assembly of the 50S subunit. In Geobacter sp. (strain M21), this protein is Large ribosomal subunit protein uL3.